Consider the following 921-residue polypeptide: Guanylate kinase-associated protein mars (921 aa).

The residue at position 49 (Ser-49) is a Phosphoserine. Thr-51 carries the phosphothreonine modification. Phosphoserine occurs at positions 76 and 170. A Phosphotyrosine modification is found at Tyr-172. Disordered stretches follow at residues 179–208 (GKGKAAEPIKPSIPKPTSAAAPPSSNTVAA) and 273–325 (RPTP…PLGN). 2 stretches are compositionally biased toward low complexity: residues 193-208 (KPTSAAAPPSSNTVAA) and 273-285 (RPTPATVTKAKTP). Ser-444 carries the phosphoserine modification. The interval 500–531 (QTTVKEDTGDSTLVPEGTKTPPRRESNGMPNY) is disordered. Thr-519 is modified (phosphothreonine). Ser-554 is modified (phosphoserine). Disordered regions lie at residues 641–660 (AGATGKNSQPNDGSEDSKPV) and 743–763 (TKVEEPTLEDGLPATSSRHSS). Residues Ser-785 and Ser-792 each carry the phosphoserine modification. 2 disordered regions span residues 809–833 (QNAAKTPPPKPRTSILKTPGTTKRQ) and 861–921 (ETVG…SEFM). Thr-826 is subject to Phosphothreonine. Positions 878-907 (EASTESGSLEQNPGRDSNQENEATPRTYTL) are enriched in polar residues.

Belongs to the SAPAP family. In terms of tissue distribution, expressed in the central nervous system and at different stages of gametogenesis. In embryos, it is expressed in central nervous system and brain. In testis, it is strongly expressed in pre-meiotic germ cells, but is not found in somatic or post-meiotic cells.

It localises to the cell membrane. The protein resides in the nucleus. It is found in the nucleoplasm. Its subcellular location is the cytoplasm. The protein localises to the cytoskeleton. It localises to the spindle. Cell cycle regulator. This is Guanylate kinase-associated protein mars (mars) from Drosophila melanogaster (Fruit fly).